The primary structure comprises 198 residues: Outer-membrane lipoprotein carrier protein (198 aa).

A signal peptide spans 1–16; sequence MKKWLVVFFLSASALA.

The protein belongs to the LolA family. In terms of assembly, monomer.

Its subcellular location is the periplasm. Its function is as follows. Participates in the translocation of lipoproteins from the inner membrane to the outer membrane. Only forms a complex with a lipoprotein if the residue after the N-terminal Cys is not an aspartate (The Asp acts as a targeting signal to indicate that the lipoprotein should stay in the inner membrane). This chain is Outer-membrane lipoprotein carrier protein, found in Vibrio vulnificus (strain YJ016).